The primary structure comprises 984 residues: Putative formate dehydrogenase SAB2186c (984 aa).

The 77-residue stretch at 3-79 folds into the 2Fe-2S ferredoxin-type domain; that stretch reads EHLVVTLDGK…PMTVNTVNND (77 aa). [2Fe-2S] cluster contacts are provided by Cys-37, Cys-48, Cys-51, and Cys-63. In terms of domain architecture, 4Fe-4S His(Cys)3-ligated-type spans 79-119; the sequence is DVKDAQKEALDRILEKHMLYCTVCDYNNGDCEIHNTMDAWG. Residues His-95, Cys-99, Cys-102, Cys-109, Cys-147, Cys-150, Cys-153, Cys-157, Cys-190, Cys-193, Cys-196, Cys-200, Cys-264, Cys-267, Cys-271, and Cys-299 each coordinate [4Fe-4S] cluster. 2 consecutive 4Fe-4S ferredoxin-type domains span residues 138–165 and 181–211; these read PFYRYDPNQCILCGRCVEACQDIEVNET and NDVPINESSCVSCGQCATVCPCNAMMEVNME. A formate dehydrogenase region spans residues 252 to 984; sequence MRKERIKKTK…YVFPGNQVDK (733 aa). Positions 257-313 constitute a 4Fe-4S Mo/W bis-MGD-type domain; the sequence is IKKTKTVCTYCGVGCSFEVWTKDREILKVQPSHDSPANKIATCVKGKFSWGHINSDQ.

In the C-terminal section; belongs to the prokaryotic molybdopterin-containing oxidoreductase family. Requires [2Fe-2S] cluster as cofactor. It depends on [4Fe-4S] cluster as a cofactor. Mo-bis(molybdopterin guanine dinucleotide) is required as a cofactor.

The catalysed reaction is formate + NAD(+) = CO2 + NADH. This Staphylococcus aureus (strain bovine RF122 / ET3-1) protein is Putative formate dehydrogenase SAB2186c.